A 190-amino-acid polypeptide reads, in one-letter code: Xanthine phosphoribosyltransferase (190 aa).

Xanthine contacts are provided by Leu20 and Asn27. 128 to 132 contributes to the 5-phospho-alpha-D-ribose 1-diphosphate binding site; the sequence is ANGKA. Xanthine is bound at residue Lys156.

The protein belongs to the purine/pyrimidine phosphoribosyltransferase family. Xpt subfamily. Homodimer.

The protein resides in the cytoplasm. It carries out the reaction XMP + diphosphate = xanthine + 5-phospho-alpha-D-ribose 1-diphosphate. It participates in purine metabolism; XMP biosynthesis via salvage pathway; XMP from xanthine: step 1/1. Its function is as follows. Converts the preformed base xanthine, a product of nucleic acid breakdown, to xanthosine 5'-monophosphate (XMP), so it can be reused for RNA or DNA synthesis. The chain is Xanthine phosphoribosyltransferase from Pseudomonas entomophila (strain L48).